The chain runs to 409 residues: Elongation factor Tu (409 aa).

Residues 10–214 (KPHVNIGTIG…AVDDNIPEPE (205 aa)) form the tr-type G domain. The G1 stretch occupies residues 19–26 (GHVDHGKT). Residue 19–26 (GHVDHGKT) coordinates GTP. Mg(2+) is bound at residue T26. Residues 60 to 64 (GITIN) form a G2 region. Residues 81–84 (DCPG) form a G3 region. Residues 81 to 85 (DCPGH) and 136 to 139 (NKKD) contribute to the GTP site. A G4 region spans residues 136-139 (NKKD). A G5 region spans residues 174-176 (SAL).

It belongs to the TRAFAC class translation factor GTPase superfamily. Classic translation factor GTPase family. EF-Tu/EF-1A subfamily. Monomer.

Its subcellular location is the cytoplasm. It carries out the reaction GTP + H2O = GDP + phosphate + H(+). Functionally, GTP hydrolase that promotes the GTP-dependent binding of aminoacyl-tRNA to the A-site of ribosomes during protein biosynthesis. This chain is Elongation factor Tu, found in Crocosphaera subtropica (strain ATCC 51142 / BH68) (Cyanothece sp. (strain ATCC 51142)).